Consider the following 504-residue polypeptide: Glycerol kinase (504 aa).

An ADP-binding site is contributed by Thr-12. ATP contacts are provided by Thr-12, Thr-13, and Ser-14. Thr-12 lines the sn-glycerol 3-phosphate pocket. Arg-16 is an ADP binding site. Residues Arg-82, Glu-83, Tyr-134, and Asp-246 each contribute to the sn-glycerol 3-phosphate site. Residues Arg-82, Glu-83, Tyr-134, Asp-246, and Gln-247 each coordinate glycerol. 2 residues coordinate ADP: Thr-268 and Gly-312. Thr-268, Gly-312, Gln-316, and Gly-413 together coordinate ATP. Residues Gly-413 and Asn-417 each contribute to the ADP site.

This sequence belongs to the FGGY kinase family.

The enzyme catalyses glycerol + ATP = sn-glycerol 3-phosphate + ADP + H(+). It participates in polyol metabolism; glycerol degradation via glycerol kinase pathway; sn-glycerol 3-phosphate from glycerol: step 1/1. With respect to regulation, inhibited by fructose 1,6-bisphosphate (FBP). Functionally, key enzyme in the regulation of glycerol uptake and metabolism. Catalyzes the phosphorylation of glycerol to yield sn-glycerol 3-phosphate. The protein is Glycerol kinase of Pseudarthrobacter chlorophenolicus (strain ATCC 700700 / DSM 12829 / CIP 107037 / JCM 12360 / KCTC 9906 / NCIMB 13794 / A6) (Arthrobacter chlorophenolicus).